Reading from the N-terminus, the 352-residue chain is C-C chemokine receptor type 5 (352 aa).

The Extracellular portion of the chain corresponds to 1 to 30 (MDYQVSSPIYDIDYGPSEPCRKIDVKQMGA). At Tyr-3 the chain carries Sulfotyrosine. O-linked (GalNAc...) serine glycosylation is found at Ser-6 and Ser-7. Sulfotyrosine is present on residues Tyr-10 and Tyr-14. 2 disulfide bridges follow: Cys-20–Cys-269 and Cys-101–Cys-178. The chain crosses the membrane as a helical span at residues 31 to 58 (HLLPPLYSMVFLFGFVGNMLVVLILINC). Over 59–68 (KRLKSMTDIY) the chain is Cytoplasmic. The chain crosses the membrane as a helical span at residues 69–89 (LLNLAISDLIFLFTVPFWAHY). The Extracellular segment spans residues 90–102 (AAGQWDFGNTMCQ). A helical membrane pass occupies residues 103–124 (FLTGLYFIGFFSGIFFIILLTI). Topologically, residues 125-141 (DRYLAIVHAVFALKART) are cytoplasmic. Residues 142 to 166 (VTFGVVTSVITWVVAVFASLPGIIF) form a helical membrane-spanning segment. The Extracellular portion of the chain corresponds to 167 to 198 (TRSQKEGYHYTCSPHFPFSQYQFWKNFETLKM). Residues 199-218 (VILGLVLPLLVMVICYSGIL) traverse the membrane as a helical segment. The Cytoplasmic segment spans residues 219–235 (KTLLRCRNEKKRHRAVR). Residues 236–260 (LIFTIMIVYFLFWAPYNIVLLLNTY) form a helical membrane-spanning segment. The Extracellular segment spans residues 261-277 (QEFFGLNNCSSSNRLDQ). A helical transmembrane segment spans residues 278–301 (AMQVTETLGMTHCCVNPIIYAFVG). Over 302–352 (EKFRNYLKVFFQKHIAKCFCECCSIFQKEAPERANSVYTRSTGEQEISVGL) the chain is Cytoplasmic. S-palmitoyl cysteine attachment occurs at residues Cys-321, Cys-323, and Cys-324. Phosphoserine; by BARK1 is present on residues Ser-337, Ser-342, and Ser-349.

Belongs to the G-protein coupled receptor 1 family. Interacts with PRAF2. Efficient ligand binding to CCL3/MIP-1alpha and CCL4/MIP-1beta requires sulfation, O-glycosylation and sialic acid modifications. Glycosylation on Ser-6 is required for efficient binding of CCL4. Interacts with GRK2. Interacts with ARRB1 and ARRB2. Interacts with CNIH4. Interacts with S100A4; this interaction stimulates T-lymphocyte chemotaxis. In terms of processing, sulfated on at least 2 of the N-terminal tyrosines. Sulfation is required for efficient binding of the chemokines, CCL3 and CCL4. Post-translationally, palmitoylation in the C-terminal is important for cell surface expression. Phosphorylation on serine residues in the C-terminal is stimulated by binding CC chemokines especially by APO-RANTES. In terms of processing, O-glycosylated, but not N-glycosylated. Ser-6 appears to be the major site even if Ser-7 may be also O-glycosylated. Also sialylated glycans present which contribute to chemokine binding. Ser-17 may also be glycosylated and, if so, with small moieties such as a T-antigen.

It is found in the cell membrane. In terms of biological role, receptor for a number of inflammatory CC-chemokines including CCL3/MIP-1-alpha, CCL4/MIP-1-beta and RANTES and subsequently transduces a signal by increasing the intracellular calcium ion level. May play a role in the control of granulocytic lineage proliferation or differentiation. Participates in T-lymphocyte migration to the infection site by acting as a chemotactic receptor. This Mico humeralifer (Black and white tassel-ear marmoset) protein is C-C chemokine receptor type 5 (CCR5).